The chain runs to 135 residues: Succinate dehydrogenase assembly factor 3, mitochondrial (135 aa).

The N-terminal 12 residues, 1 to 12, are a transit peptide targeting the mitochondrion; that stretch reads MRIFTRLLYAAP.

This sequence belongs to the complex I LYR family. SDHAF3 subfamily. In terms of assembly, interacts with the iron-sulfur protein subunit within the SDH catalytic dimer.

Its subcellular location is the mitochondrion matrix. Its function is as follows. Plays an essential role in the assembly of succinate dehydrogenase (SDH), an enzyme complex (also referred to as respiratory complex II) that is a component of both the tricarboxylic acid (TCA) cycle and the mitochondrial electron transport chain, and which couples the oxidation of succinate to fumarate with the reduction of ubiquinone (coenzyme Q) to ubiquinol. Promotes maturation of the iron-sulfur protein subunit of the SDH catalytic dimer, protecting it from the deleterious effects of oxidants. May act together with SDHAF1. This chain is Succinate dehydrogenase assembly factor 3, mitochondrial, found in Emericella nidulans (strain FGSC A4 / ATCC 38163 / CBS 112.46 / NRRL 194 / M139) (Aspergillus nidulans).